A 365-amino-acid polypeptide reads, in one-letter code: Histidinol-phosphate aminotransferase (365 aa).

The disordered stretch occupies residues 1–22 (MSRPVPNPGILDIAPYTPGKSP). At Lys221 the chain carries N6-(pyridoxal phosphate)lysine.

It belongs to the class-II pyridoxal-phosphate-dependent aminotransferase family. Histidinol-phosphate aminotransferase subfamily. Homodimer. Pyridoxal 5'-phosphate is required as a cofactor.

The enzyme catalyses L-histidinol phosphate + 2-oxoglutarate = 3-(imidazol-4-yl)-2-oxopropyl phosphate + L-glutamate. It participates in amino-acid biosynthesis; L-histidine biosynthesis; L-histidine from 5-phospho-alpha-D-ribose 1-diphosphate: step 7/9. In Nitrobacter winogradskyi (strain ATCC 25391 / DSM 10237 / CIP 104748 / NCIMB 11846 / Nb-255), this protein is Histidinol-phosphate aminotransferase.